We begin with the raw amino-acid sequence, 330 residues long: MTASRDIACRVRGFGAYTPVDVLTNFDLEKFVETTDEWITTRTGIRQRHRLAEGQNASDAATEAARLALADAGMEPGEITHVINATCTPDYLCPNTACLVEAKLGIMGAMAFDFNAACSGYVYGLSMARAIVAAQPEARVLLTATEALTRRLNWADRTTCVLFGDGAGASVITAEGEGALLEDVLCASDGNLGGLLTIGGGTHTPYAKGDPVGEDFFVQMNGRDVFKHAVRNMAAISQDVLARNGLTIDDVALVIPHQANLRIIEAVGDRLGVPAERVFVNLHEFGNTSAASVPLAIADARAKGVLRPGMRVLLATFGGGFTWGAALLHF.

Residues cysteine 118 and histidine 257 contribute to the active site. The interval 258 to 262 (QANLR) is ACP-binding. Residue asparagine 287 is part of the active site.

The protein belongs to the thiolase-like superfamily. FabH family. In terms of assembly, homodimer.

The protein resides in the cytoplasm. The catalysed reaction is malonyl-[ACP] + acetyl-CoA + H(+) = 3-oxobutanoyl-[ACP] + CO2 + CoA. Its pathway is lipid metabolism; fatty acid biosynthesis. In terms of biological role, catalyzes the condensation reaction of fatty acid synthesis by the addition to an acyl acceptor of two carbons from malonyl-ACP. Catalyzes the first condensation reaction which initiates fatty acid synthesis and may therefore play a role in governing the total rate of fatty acid production. Possesses both acetoacetyl-ACP synthase and acetyl transacylase activities. Its substrate specificity determines the biosynthesis of branched-chain and/or straight-chain of fatty acids. In Nitratidesulfovibrio vulgaris (strain DSM 19637 / Miyazaki F) (Desulfovibrio vulgaris), this protein is Beta-ketoacyl-[acyl-carrier-protein] synthase III.